Consider the following 375-residue polypeptide: RING-H2 finger protein ATL16 (375 aa).

Positions 1–20 (MDLSNRRNPLRDLSFPPPPP) are disordered. Residues 39–59 (VAVIGILATAFLLVSYYVFVI) traverse the membrane as a helical segment. An RING-type; atypical zinc finger spans residues 138–180 (CSVCLSEFQDEEKLRIIPNCSHLFHIDCIDVWLQNNANCPLCR). Disordered regions lie at residues 223 to 266 (GSDR…DRGG) and 356 to 375 (SFGS…YFEP). Residues 238–257 (QERSNSGYLLNENTQNSISP) show a composition bias toward polar residues.

Belongs to the RING-type zinc finger family. ATL subfamily.

The protein resides in the membrane. It catalyses the reaction S-ubiquitinyl-[E2 ubiquitin-conjugating enzyme]-L-cysteine + [acceptor protein]-L-lysine = [E2 ubiquitin-conjugating enzyme]-L-cysteine + N(6)-ubiquitinyl-[acceptor protein]-L-lysine.. Its pathway is protein modification; protein ubiquitination. In Arabidopsis thaliana (Mouse-ear cress), this protein is RING-H2 finger protein ATL16 (ATL16).